Consider the following 334-residue polypeptide: Phosphate acyltransferase (334 aa).

Belongs to the PlsX family. Homodimer. Probably interacts with PlsY.

It is found in the cytoplasm. The enzyme catalyses a fatty acyl-[ACP] + phosphate = an acyl phosphate + holo-[ACP]. Its pathway is lipid metabolism; phospholipid metabolism. Its function is as follows. Catalyzes the reversible formation of acyl-phosphate (acyl-PO(4)) from acyl-[acyl-carrier-protein] (acyl-ACP). This enzyme utilizes acyl-ACP as fatty acyl donor, but not acyl-CoA. This Halothermothrix orenii (strain H 168 / OCM 544 / DSM 9562) protein is Phosphate acyltransferase.